The chain runs to 265 residues: Acetylglutamate kinase (265 aa).

Substrate is bound by residues 41 to 42, arginine 63, and asparagine 156; that span reads GG.

The protein belongs to the acetylglutamate kinase family. ArgB subfamily.

It is found in the cytoplasm. The enzyme catalyses N-acetyl-L-glutamate + ATP = N-acetyl-L-glutamyl 5-phosphate + ADP. It functions in the pathway amino-acid biosynthesis; L-arginine biosynthesis; N(2)-acetyl-L-ornithine from L-glutamate: step 2/4. Catalyzes the ATP-dependent phosphorylation of N-acetyl-L-glutamate. The protein is Acetylglutamate kinase of Brevibacillus brevis (strain 47 / JCM 6285 / NBRC 100599).